The following is a 370-amino-acid chain: Popeye domain-containing 2 (370 aa).

Transmembrane regions (helical) follow at residues 51–71 (ALYIFSFLAPAFLCLALWGWL) and 78–98 (VFIWNLLLMLQCLAQVCHLIF). Residues 275 to 349 (PSPPGSEGGS…SGEDSTSLIL (75 aa)) form a disordered region. Residues 283-294 (GSASSPPRGSLG) show a composition bias toward low complexity. Polar residues-rich tracts occupy residues 307 to 319 (NPGSGTRNPQPDQ) and 330 to 347 (QHWSSDTEMPSGEDSTSL).

Belongs to the popeye family. In terms of tissue distribution, expressed in the heart and, slightly, in skeletal muscle.

It localises to the membrane. It is found in the cell membrane. The protein localises to the sarcolemma. Important for striated muscle differentiation and cardiac morphogenesis. Is also required for cardiac conduction system development, plays a regulatory function in heart rate dynamics mediated, at least in part, through cAMP-binding. This is Popeye domain-containing 2 from Danio rerio (Zebrafish).